A 285-amino-acid chain; its full sequence is Golgi to ER traffic protein 2 (285 aa).

The span at 1 to 10 (MSELTEAEKR) shows a compositional bias: basic and acidic residues. Disordered stretches follow at residues 1–72 (MSEL…KEDS) and 87–106 (MQGQGTGKSTPQDSSTPDLL). At Ser2 the chain carries N-acetylserine. Over 2 to 148 (SELTEAEKRR…LDYHDYLLNR (147 aa)) the chain is Cytoplasmic. The span at 11 to 20 (RLLRERRQKK) shows a compositional bias: basic residues. Residues 24 to 42 (GGASSRLNKITGQASSHLN) show a composition bias toward polar residues. Ser45 carries the post-translational modification Phosphoserine. Positions 49 to 60 (APSAAKTTPPAS) are enriched in low complexity. A compositionally biased stretch (polar residues) spans 93–104 (GKSTPQDSSTPD). A helical membrane pass occupies residues 149–169 (LKAWTILVKWVFFLLPYLYLI). Over 170–196 (TRPNSSVWPAYAFTQSAWFAPLRNPSN) the chain is Lumenal. 2 N-linked (GlcNAc...) asparagine glycosylation sites follow: Asn173 and Asn196. The helical transmembrane segment at 197 to 216 (FTRIFATFEFLSISIYYQLL) threads the bilayer. Topologically, residues 217 to 263 (KNVEHKSKIKNLQDTNKLVKLVSLVPEGVIPVANLKGKLITLLQYWD) are cytoplasmic. Residues 264-284 (LLSMLITDISFVLIVLGLLTY) form a helical membrane-spanning segment. Leu285 is a topological domain (lumenal).

Belongs to the GET2 family. As to quaternary structure, component of the Golgi to ER traffic (GET) complex, which is composed of GET1, GET2 and GET3. Within the complex, GET1 and GET2 form a heterotetramer which is stabilized by phosphatidylinositol binding and which binds to the GET3 homodimer.

It localises to the endoplasmic reticulum membrane. The protein localises to the golgi apparatus membrane. Its function is as follows. Required for the post-translational delivery of tail-anchored (TA) proteins to the endoplasmic reticulum. Together with GET1, acts as a membrane receptor for soluble GET3, which recognizes and selectively binds the transmembrane domain of TA proteins in the cytosol. The GET complex cooperates with the HDEL receptor ERD2 to mediate the ATP-dependent retrieval of resident ER proteins that contain a C-terminal H-D-E-L retention signal from the Golgi to the ER. Involved in DNA replication and DNA damage response and also in cell wall function. This Saccharomyces cerevisiae (strain RM11-1a) (Baker's yeast) protein is Golgi to ER traffic protein 2.